Consider the following 576-residue polypeptide: Type II restriction enzyme BsuRI (576 aa).

Monomer. Mg(2+) serves as cofactor.

It catalyses the reaction Endonucleolytic cleavage of DNA to give specific double-stranded fragments with terminal 5'-phosphates.. In terms of biological role, a P subtype restriction enzyme that recognizes the double-stranded sequence 5'-GGCC-3' and cleaves after G-2. The sequence is that of Type II restriction enzyme BsuRI (hsdRR) from Bacillus subtilis.